Consider the following 211-residue polypeptide: Metalloproteinase inhibitor 3 (211 aa).

The first 23 residues, 1 to 23 (MTPWLGLVVLLGSWSLGDWGAEA), serve as a signal peptide directing secretion. Cys24 lines the Zn(2+) pocket. Involved in metalloproteinase-binding regions lie at residues 24-27 (CTCS) and 88-89 (ES). 6 disulfide bridges follow: Cys24–Cys91, Cys26–Cys118, Cys36–Cys143, Cys145–Cys192, Cys150–Cys155, and Cys163–Cys184. The NTR domain maps to 24-143 (CTCSPSHPQD…GLNYRYHLGC (120 aa)). A mediates interaction with EFEMP1 region spans residues 105–188 (TGRVYDGKMY…SKHYACIRQK (84 aa)). The N-linked (GlcNAc...) asparagine glycan is linked to Asn207.

It belongs to the protease inhibitor I35 (TIMP) family. In terms of assembly, interacts with EFEMP1. Interacts with KDR.

The protein resides in the secreted. It localises to the extracellular space. The protein localises to the extracellular matrix. In terms of biological role, mediates a variety of processes including matrix regulation and turnover, inflammation, and angiogenesis, through reversible inhibition of zinc protease superfamily enzymes, primarily matrix metalloproteinases (MMPs). Regulates extracellular matrix (ECM) remodeling through inhibition of matrix metalloproteinases (MMP) including MMP-1, MMP-2, MMP-3, MMP-7, MMP-9, MMP-13, MMP-14 and MMP-15. Additionally, modulates the processing of amyloid precursor protein (APP) and apolipoprotein E receptor ApoER2 by inhibiting two alpha-secretases ADAM10 and ADAM17. Functions as a tumor suppressor and a potent inhibitor of angiogenesis. Exerts its anti-angiogenic effect by directly interacting with vascular endothelial growth factor (VEGF) receptor-2/KDR, preventing its binding to the VEGFA ligand. Selectively induces apoptosis in angiogenic endothelial cells through a caspase-independent cell death pathway. Mechanistically, inhibits matrix-induced focal adhesion kinase PTK2 tyrosine phosphorylation and association with paxillin/PXN and disrupts the incorporation of ITGB3, PTK2 and PXN into focal adhesion contacts on the matrix. The sequence is that of Metalloproteinase inhibitor 3 (TIMP3) from Equus caballus (Horse).